A 165-amino-acid chain; its full sequence is Putative ankyrin repeat domain-containing protein 20A5 (165 aa).

ANK repeat units follow at residues 66–95 (QHRT…QIDI), 99–128 (ENRT…NPNL), and 132–161 (YGNT…NIEA).

The protein is Putative ankyrin repeat domain-containing protein 20A5 (ANKRD20A5P) of Homo sapiens (Human).